Here is a 168-residue protein sequence, read N- to C-terminus: Plastocyanin, chloroplastic (168 aa).

The 99-residue stretch at Val70 to Asn168 folds into the Plastocyanin-like domain. Cu cation-binding residues include His106, Cys153, His156, and Met161.

The protein belongs to the plastocyanin family. Requires Cu(2+) as cofactor.

The protein resides in the plastid. Its subcellular location is the chloroplast thylakoid membrane. In terms of biological role, participates in electron transfer between P700 and the cytochrome b6-f complex in photosystem I. The sequence is that of Plastocyanin, chloroplastic (PETE) from Spinacia oleracea (Spinach).